The sequence spans 856 residues: MNVIDTDDLEKHTPMMRQYLTMKAEHHDMLLFYRMGDFYELFYDDAKRASELLGISLTARGKSGGDPIPMAGLPYHAVEGYLAKLVQIGQSVAICEQIGDPATSKGPVERKVVRIVTPGTLTDEALLQERQDNLLAAVYQGKIGFGYATLDVSSGRFVIAELDTRESLEAELQRTNPVEILYSEDFGELGLLNGFKGKRRRPEWEFDYDTSIKLLLTQFGTKDLHGFGIADARLSLQAAGCLMQYVKDTQRTALPHINAITRFNQTDSIVLDAATRRNLELTQNLAGGRDNTLAAVLDNTATPMGSRMLQRWIHQPLRDPKHIKARQQAVTELLDTTAHEGLHEQLKALGDIERIMARLALRTARPRDFARLRQALGLLPELQQSLSTLSAPHTTQLRQHIGEFPAEQALLERAIVDNPPMLIRDGGVIREGYNSELDEWRGLSEGASDYLVQLEAREKERTGINTLKVGYNRVHGYYIEVSRLQSSQVPLNYQRRQTLKNMERYITPELKEYEEKVLSSQGKALALEKQLWEQLFDLILPKLHELQAFARAAAELDVLSNFAERAETLGYTCPELSQDIGVQIEAGRHPVVERVSQTPFIANPVTLHNQRRMLIVTGPNMGGKSTYMRQVALITLMAHIGCFVPADRALIGPIDRIFTRIGASDDLASGRSTFMVEMTETANILHNASASSLVLMDEIGRGTSTYDGLSLAWSAAEYLAQQVGAMTLFATHYFELTQLPELMAGVYNVHLDAIEHDDTIAFMHAVQEGAASKSYGLQVAALAGVPNKVIKAAKHKLQQLESRDHQAEGTRTPIQSLLALPEPVENPALTKLSNINPDNLTPKQALDLLYELKRLS.

Residue 618 to 625 coordinates ATP; it reads GPNMGGKS.

The protein belongs to the DNA mismatch repair MutS family.

Its function is as follows. This protein is involved in the repair of mismatches in DNA. It is possible that it carries out the mismatch recognition step. This protein has a weak ATPase activity. The polypeptide is DNA mismatch repair protein MutS (Shewanella baltica (strain OS195)).